Reading from the N-terminus, the 927-residue chain is Small conductance calcium-activated potassium channel protein (927 aa).

The span at 1-31 (MSIQKLNDTTNSGYVSSEETDSLLVSSSNPS) shows a compositional bias: polar residues. Disordered regions lie at residues 1-131 (MSIQ…EDVE), 181-251 (LSLK…VKSA), and 296-336 (HLHQ…SSST). Low complexity predominate over residues 45–62 (SNSTNGPTTGASTSSSGS). The span at 63–77 (VSGGGGGSGSGGGSA) shows a compositional bias: gly residues. Polar residues-rich tracts occupy residues 95–107 (TSTY…QSQH) and 200–214 (NLGT…SSIP). 2 stretches are compositionally biased toward low complexity: residues 219-232 (SRCR…RRAS) and 296-308 (HLHQ…SQQQ). The segment covering 314–336 (ITSSPTNGSRIIRQSSQPESSST) has biased composition (polar residues). Residues 489 to 509 (ALVMGMFGIIVMVIENELSSA) form a helical membrane-spanning segment. A helical membrane pass occupies residues 530-550 (TVILLGLIVAYHALEVQLFMI). A helical transmembrane segment spans residues 569 to 589 (IGLELFICAIHPIPGEYYFQW). The helical transmembrane segment at 609-629 (VALSLPMFLRLYLICRVMLLH) threads the bilayer. A helical transmembrane segment spans residues 658-678 (LMTICPGTVLLVFMVSLWIIA). Positions 696–716 (LLNSMWLTAITFLCVGYGDIV) form an intramembrane region, pore-forming. The helical transmembrane segment at 724–744 (GITLTCGMVGAGCTALLVAVV) threads the bilayer. Positions 763–839 (DTQLTKRLKN…ITDMAKTQNT (77 aa)) are calmodulin-binding.

The protein belongs to the potassium channel KCNN family. SK subfamily. As to quaternary structure, heterooligomer. The complex is composed of 4 channel subunits each of which binds to a calmodulin subunit which regulates the channel activity through calcium-binding.

The protein resides in the membrane. In terms of biological role, forms a voltage-independent potassium channel activated by intracellular calcium. Activation is followed by membrane hyperpolarization. Thought to regulate neuronal excitability by contributing to the slow component of synaptic afterhyperpolarization. The channel is blocked by apamin. In Drosophila melanogaster (Fruit fly), this protein is Small conductance calcium-activated potassium channel protein.